Reading from the N-terminus, the 1410-residue chain is Endoribonuclease Dicer homolog 2a (1410 aa).

Gly residues predominate over residues 1 to 15 (MGGPLTAAGGRGDGG). The segment at 1 to 30 (MGGPLTAAGGRGDGGAKAVEPLRPPPPPDP) is disordered. A Helicase ATP-binding domain is found at 41 to 222 (ALERAVRGNT…HNYSKQISEI (182 aa)). Position 54-61 (54-61 (LETGSGKT)) interacts with ATP. A DECH box motif is present at residues 163–166 (DECH). A Helicase C-terminal domain is found at 388–561 (TLLQYRHMQD…DTYYRVESTR (174 aa)). In terms of domain architecture, Dicer dsRNA-binding fold spans 569-655 (SVPLIHFFCS…LPELDVPCDE (87 aa)). The region spanning 827–942 (KDIDLLQTKD…LPPELCRIIM (116 aa)) is the PAZ domain. RNase III domains lie at 969–1124 (SVKL…STAG) and 1161–1308 (VRSL…LDSK). Residues Glu-1200, Asp-1294, and Glu-1297 each coordinate Mg(2+). Residues 1334 to 1400 (DPVKGLQEFC…SKAVLKDLIA (67 aa)) form the DRBM domain.

This sequence belongs to the helicase family. Dicer subfamily. May interact with ARGONAUTE1 or PINHEAD through their common PAZ domains. Requires Mg(2+) as cofactor. It depends on Mn(2+) as a cofactor.

It is found in the nucleus. Functionally, probably involved in the RNA silencing pathway. May cleave double-stranded RNA to produce short 21-24 nucleotides (nt) RNAs which target the selective destruction of complementary RNAs. This Oryza sativa subsp. japonica (Rice) protein is Endoribonuclease Dicer homolog 2a (DCL2A).